The following is a 629-amino-acid chain: Keratin, type II cytoskeletal 3 (629 aa).

The interval 1-182 is head; sequence MNRQVCKTSG…DPQIGQVRAQ (182 aa). Serine 13 and serine 62 each carry phosphoserine. The segment at 183 to 218 is coil 1A; sequence EREQIKTLNNKFASFIDKVRFLEQQNKVLETKWELL. An IF rod domain is found at 183–498; it reads EREQIKTLNN…KLLEGEESRM (316 aa). Residues 219–239 form a linker 1 region; sequence QRQGPNSVTGTNNLEPLFENR. Residues 240 to 331 form a coil 1B region; it reads INYLRSYLDS…TLYDAELSQM (92 aa). Lysine 281 carries the post-translational modification N6,N6-dimethyllysine. A linker 12 region spans residues 332 to 355; sequence QSHVSDMSVVLSMDNNRSLDLDSI. Serine 349 is modified (phosphoserine). The coil 2 stretch occupies residues 356–494; it reads IAEVRAQYED…ATYRKLLEGE (139 aa). The segment at 495-629 is tail; sequence ESRMSGECQS…FSQSSQRYSR (135 aa). The interval 603–629 is disordered; it reads SGGGFSSGSSSRGSSVKFSQSSQRYSR. Positions 618–629 are enriched in polar residues; it reads VKFSQSSQRYSR.

This sequence belongs to the intermediate filament family. Heterotetramer of two type I and two type II keratins. Keratin-3 associates with keratin-12. As to expression, cornea specific. Expressed in the basal cells of corneal epithelium and stroma. Also expressed in esophageal epithelium.

The sequence is that of Keratin, type II cytoskeletal 3 (KRT3) from Oryctolagus cuniculus (Rabbit).